Here is a 604-residue protein sequence, read N- to C-terminus: Probable translation initiation factor IF-2 (604 aa).

The tr-type G domain occupies I18 to M232. The segment at G27–T34 is G1. G27–T34 lines the GTP pocket. The tract at residues A52–H56 is G2. Residues D88–G91 are G3. GTP is bound by residues D88–H92 and T142–D145. The segment at T142–D145 is G4. The G5 stretch occupies residues S210–H212.

The protein belongs to the TRAFAC class translation factor GTPase superfamily. Classic translation factor GTPase family. IF-2 subfamily.

Its function is as follows. Function in general translation initiation by promoting the binding of the formylmethionine-tRNA to ribosomes. Seems to function along with eIF-2. The sequence is that of Probable translation initiation factor IF-2 from Methanospirillum hungatei JF-1 (strain ATCC 27890 / DSM 864 / NBRC 100397 / JF-1).